Reading from the N-terminus, the 185-residue chain is N-alpha-acetyltransferase 30 (185 aa).

The region spanning 31 to 179 (IEYIPYQGES…DAVRLLLPLN (149 aa)) is the N-acetyltransferase domain.

It belongs to the acetyltransferase family. MAK3 subfamily.

Functionally, probable catalytic component of a complex displaying alpha (N-terminal) acetyltransferase activity. In Dictyostelium discoideum (Social amoeba), this protein is N-alpha-acetyltransferase 30.